The sequence spans 172 residues: Adenylate kinase isoenzyme 6 (172 aa).

The ATP site is built by Gly-13, Gly-15, Lys-16, Thr-17, and Thr-18. Residues 33–56 form an NMPbind region; it reads NVGDLAREGQLYDGYDEEYDCPIL. The LID stretch occupies residues 108 to 118; that stretch reads NRGYNEKKLKD. Positions 109 and 148 each coordinate ATP.

The protein belongs to the adenylate kinase family. AK6 subfamily. As to quaternary structure, monomer and homodimer. Interacts with small ribosomal subunit protein uS11. Not a structural component of 43S pre-ribosomes, but transiently interacts with them by binding to uS11. Interacts with COIL (via C-terminus).

It localises to the cytoplasm. The protein resides in the nucleus. Its subcellular location is the nucleoplasm. The protein localises to the cajal body. It catalyses the reaction AMP + ATP = 2 ADP. It carries out the reaction ATP + H2O = ADP + phosphate + H(+). Broad-specificity nucleoside monophosphate (NMP) kinase that catalyzes the reversible transfer of the terminal phosphate group between nucleoside triphosphates and monophosphates. Also has ATPase activity. Involved in the late cytoplasmic maturation steps of the 40S ribosomal particles, specifically 18S rRNA maturation. While NMP activity is not required for ribosome maturation, ATPase activity is. Associates transiently with small ribosomal subunit protein uS11. ATP hydrolysis breaks the interaction with uS11. May temporarily remove uS11 from the ribosome to enable a conformational change of the ribosomal RNA that is needed for the final maturation step of the small ribosomal subunit. Its NMP activity may have a role in nuclear energy homeostasis. May be involved in regulation of Cajal body (CB) formation. The polypeptide is Adenylate kinase isoenzyme 6 (Bos taurus (Bovine)).